The sequence spans 156 residues: 6,7-dimethyl-8-ribityllumazine synthase (156 aa).

5-amino-6-(D-ribitylamino)uracil-binding positions include Phe-22, 57 to 59 (AYE), and 81 to 83 (TVI). 86 to 87 (GT) provides a ligand contact to (2S)-2-hydroxy-3-oxobutyl phosphate. The active-site Proton donor is the His-89. A 5-amino-6-(D-ribitylamino)uracil-binding site is contributed by Phe-114. Arg-128 contacts (2S)-2-hydroxy-3-oxobutyl phosphate.

It belongs to the DMRL synthase family. In terms of assembly, forms an icosahedral capsid composed of 60 subunits, arranged as a dodecamer of pentamers.

It catalyses the reaction (2S)-2-hydroxy-3-oxobutyl phosphate + 5-amino-6-(D-ribitylamino)uracil = 6,7-dimethyl-8-(1-D-ribityl)lumazine + phosphate + 2 H2O + H(+). It functions in the pathway cofactor biosynthesis; riboflavin biosynthesis; riboflavin from 2-hydroxy-3-oxobutyl phosphate and 5-amino-6-(D-ribitylamino)uracil: step 1/2. Functionally, catalyzes the formation of 6,7-dimethyl-8-ribityllumazine by condensation of 5-amino-6-(D-ribitylamino)uracil with 3,4-dihydroxy-2-butanone 4-phosphate. This is the penultimate step in the biosynthesis of riboflavin. The sequence is that of 6,7-dimethyl-8-ribityllumazine synthase from Photorhabdus laumondii subsp. laumondii (strain DSM 15139 / CIP 105565 / TT01) (Photorhabdus luminescens subsp. laumondii).